The chain runs to 310 residues: Nitric oxide synthase-interacting protein homolog (310 aa).

Positions 115 to 124 (FSAIESTPSR) are enriched in polar residues. Residues 115-141 (FSAIESTPSRTGAVATPRPEVGSLKRQ) form a disordered region.

Belongs to the NOSIP family.

It localises to the cytoplasm. The protein localises to the nucleus. Negatively regulates nitric oxide production by inducing nitric oxide synthase translocation to actin cytoskeleton and inhibiting its enzymatic activity. This Caenorhabditis elegans protein is Nitric oxide synthase-interacting protein homolog.